A 420-amino-acid polypeptide reads, in one-letter code: Threonine aspartase 1 (420 aa).

The tract at residues methionine 1–valine 25 is disordered. The active-site Nucleophile is the threonine 234.

It belongs to the Ntn-hydrolase family. In terms of assembly, intramolecular proteolysis generates 2 subunits, alpha and beta, which reassemble through a non-covalent association to form the fully active enzyme.

Its function is as follows. Protease responsible for KMT2A/MLL1 and KMT2D/MLL2 processing and activation. Through substrate activation, it controls the expression of HOXA genes, and the expression of key cell cycle regulators including CCNA1, CCNB1, CCNE1 and CDKN2A. The sequence is that of Threonine aspartase 1 (Tasp1) from Mus musculus (Mouse).